The following is a 166-amino-acid chain: Sec-independent protein translocase protein TatB (166 aa).

The helical transmembrane segment at 1 to 21 (MIDIAFSKLAIIGVAALVFIG) threads the bilayer. Positions 85–146 (DSSLHSAWDE…SGQKSRVISG (62 aa)) are disordered.

The protein belongs to the TatB family. As to quaternary structure, the Tat system comprises two distinct complexes: a TatABC complex, containing multiple copies of TatA, TatB and TatC subunits, and a separate TatA complex, containing only TatA subunits. Substrates initially bind to the TatABC complex, which probably triggers association of the separate TatA complex to form the active translocon.

It is found in the cell inner membrane. In terms of biological role, part of the twin-arginine translocation (Tat) system that transports large folded proteins containing a characteristic twin-arginine motif in their signal peptide across membranes. Together with TatC, TatB is part of a receptor directly interacting with Tat signal peptides. TatB may form an oligomeric binding site that transiently accommodates folded Tat precursor proteins before their translocation. The chain is Sec-independent protein translocase protein TatB from Herminiimonas arsenicoxydans.